The chain runs to 207 residues: Cytochrome c biogenesis ATP-binding export protein CcmA (207 aa).

The ABC transporter domain maps to 4–207 (LEARELLCER…RISLTQTRAA (204 aa)). Residue 36–43 (GSNGAGKT) participates in ATP binding.

Belongs to the ABC transporter superfamily. CcmA exporter (TC 3.A.1.107) family. As to quaternary structure, the complex is composed of two ATP-binding proteins (CcmA) and two transmembrane proteins (CcmB).

Its subcellular location is the cell inner membrane. It carries out the reaction heme b(in) + ATP + H2O = heme b(out) + ADP + phosphate + H(+). Part of the ABC transporter complex CcmAB involved in the biogenesis of c-type cytochromes; once thought to export heme, this seems not to be the case, but its exact role is uncertain. Responsible for energy coupling to the transport system. The polypeptide is Cytochrome c biogenesis ATP-binding export protein CcmA (Shigella boydii serotype 4 (strain Sb227)).